The primary structure comprises 215 residues: 3-demethoxyubiquinol 3-hydroxylase (215 aa).

Fe cation is bound by residues Glu-64, Glu-94, His-97, Glu-146, Glu-178, and His-181.

Belongs to the COQ7 family. Fe cation serves as cofactor.

It is found in the cell membrane. It catalyses the reaction a 5-methoxy-2-methyl-3-(all-trans-polyprenyl)benzene-1,4-diol + AH2 + O2 = a 3-demethylubiquinol + A + H2O. The protein operates within cofactor biosynthesis; ubiquinone biosynthesis. Catalyzes the hydroxylation of 2-nonaprenyl-3-methyl-6-methoxy-1,4-benzoquinol during ubiquinone biosynthesis. The protein is 3-demethoxyubiquinol 3-hydroxylase of Coxiella burnetii (strain Dugway 5J108-111).